The primary structure comprises 260 residues: Receptor-recognizing protein gp38 (260 aa).

10 consecutive short sequence motifs (GRM) follow at residues 116–123, 125–132, 152–160, 162–173, 176–182, 185–191, 194–204, 210–216, 219–224, and 228–240; these read GRGGNGGS, AAGAAGGN, GGGGGGGGG, RGKLIFGGGGGR, GAGGSSS, SSGATAG, SAPGKGSVGEG, TGGAGGN, AAGGRC, and GNGT…AAGK. A disordered region spans residues 176–197; it reads GAGGSSSHMSSGATAGTISAPG. The segment covering 180–191 has biased composition (low complexity); that stretch reads SSSHMSSGATAG.

Belongs to the receptor-recognizing protein gp38 family.

The protein localises to the virion. Functionally, receptor binding protein (RBP) that is at the tip of the long tail fibers and serves as the phage recognition site for the attachment host receptor OmpA. The protein is Receptor-recognizing protein gp38 (38) of Escherichia coli (Bacteriophage K3).